The chain runs to 512 residues: Glutathione-binding protein GsiB (512 aa).

A signal peptide spans 1–26 (MARAVHRSGLVALGIATALMASCAFA).

Belongs to the bacterial solute-binding protein 5 family. In terms of assembly, the complex is composed of two ATP-binding proteins (GsiA), two transmembrane proteins (GsiC and GsiD) and a solute-binding protein (GsiB).

It localises to the periplasm. Functionally, part of the ABC transporter complex GsiABCD involved in glutathione import. Binds glutathione. This is Glutathione-binding protein GsiB from Shigella boydii serotype 4 (strain Sb227).